The chain runs to 347 residues: Quinolinate synthase (347 aa).

Iminosuccinate-binding residues include H47 and S68. Position 113 (C113) interacts with [4Fe-4S] cluster. Iminosuccinate contacts are provided by residues 139 to 141 (YAN) and S156. A [4Fe-4S] cluster-binding site is contributed by C200. Iminosuccinate-binding positions include 226–228 (HPE) and T243. C297 contacts [4Fe-4S] cluster.

Belongs to the quinolinate synthase family. Type 1 subfamily. [4Fe-4S] cluster is required as a cofactor.

It is found in the cytoplasm. It catalyses the reaction iminosuccinate + dihydroxyacetone phosphate = quinolinate + phosphate + 2 H2O + H(+). It functions in the pathway cofactor biosynthesis; NAD(+) biosynthesis; quinolinate from iminoaspartate: step 1/1. Its function is as follows. Catalyzes the condensation of iminoaspartate with dihydroxyacetone phosphate to form quinolinate. This Shigella boydii serotype 18 (strain CDC 3083-94 / BS512) protein is Quinolinate synthase.